The sequence spans 146 residues: MAIYGIGTDIVQVSRVAAVLERTGGRFAEKVLGPDELRVFHARRARSEARGIAFLATRFSAKEAFSKAIGLGMHWPMTWRALQTLNRPSGEPYVVASGELADWLAARGITARVTVSDERDYAVSFVIAETGLPAPDAPTAVSRTTP.

Mg(2+) is bound by residues D9 and E63.

It belongs to the P-Pant transferase superfamily. AcpS family. Mg(2+) serves as cofactor.

It localises to the cytoplasm. It catalyses the reaction apo-[ACP] + CoA = holo-[ACP] + adenosine 3',5'-bisphosphate + H(+). Functionally, transfers the 4'-phosphopantetheine moiety from coenzyme A to a Ser of acyl-carrier-protein. This Burkholderia multivorans (strain ATCC 17616 / 249) protein is Holo-[acyl-carrier-protein] synthase.